We begin with the raw amino-acid sequence, 240 residues long: UDP-2,3-diacylglucosamine hydrolase (240 aa).

Residues aspartate 9, histidine 11, aspartate 43, asparagine 81, and histidine 116 each contribute to the Mn(2+) site. 81–82 (NR) is a substrate binding site. Residues aspartate 124, serine 162, lysine 166, lysine 169, and histidine 197 each coordinate substrate. Histidine 197 and histidine 199 together coordinate Mn(2+).

Belongs to the LpxH family. Mn(2+) serves as cofactor.

The protein resides in the cell inner membrane. The enzyme catalyses UDP-2-N,3-O-bis[(3R)-3-hydroxytetradecanoyl]-alpha-D-glucosamine + H2O = 2-N,3-O-bis[(3R)-3-hydroxytetradecanoyl]-alpha-D-glucosaminyl 1-phosphate + UMP + 2 H(+). Its pathway is glycolipid biosynthesis; lipid IV(A) biosynthesis; lipid IV(A) from (3R)-3-hydroxytetradecanoyl-[acyl-carrier-protein] and UDP-N-acetyl-alpha-D-glucosamine: step 4/6. In terms of biological role, hydrolyzes the pyrophosphate bond of UDP-2,3-diacylglucosamine to yield 2,3-diacylglucosamine 1-phosphate (lipid X) and UMP by catalyzing the attack of water at the alpha-P atom. Involved in the biosynthesis of lipid A, a phosphorylated glycolipid that anchors the lipopolysaccharide to the outer membrane of the cell. This chain is UDP-2,3-diacylglucosamine hydrolase, found in Neisseria meningitidis serogroup C (strain 053442).